Reading from the N-terminus, the 265-residue chain is Type III pantothenate kinase (265 aa).

Residue 6–13 coordinates ATP; sequence DVGNTNIV. 112-115 provides a ligand contact to substrate; it reads GADR. The Proton acceptor role is filled by D114. D134 serves as a coordination point for K(+). T137 contacts ATP. Residue T189 coordinates substrate.

It belongs to the type III pantothenate kinase family. As to quaternary structure, homodimer. NH4(+) serves as cofactor. K(+) is required as a cofactor.

The protein resides in the cytoplasm. The enzyme catalyses (R)-pantothenate + ATP = (R)-4'-phosphopantothenate + ADP + H(+). It participates in cofactor biosynthesis; coenzyme A biosynthesis; CoA from (R)-pantothenate: step 1/5. Catalyzes the phosphorylation of pantothenate (Pan), the first step in CoA biosynthesis. The polypeptide is Type III pantothenate kinase (Saccharopolyspora erythraea (strain ATCC 11635 / DSM 40517 / JCM 4748 / NBRC 13426 / NCIMB 8594 / NRRL 2338)).